We begin with the raw amino-acid sequence, 265 residues long: Mlc titration factor A (265 aa).

H111, H148, H152, and E211 together coordinate Zn(2+).

It belongs to the MtfA family. In terms of assembly, interacts with Mlc. Zn(2+) is required as a cofactor.

The protein resides in the cytoplasm. Involved in the modulation of the activity of the glucose-phosphotransferase system (glucose-PTS). Interacts with the transcriptional repressor Mlc, preventing its interaction with DNA and leading to the modulation of expression of genes regulated by Mlc, including ptsG, which encodes the PTS system glucose-specific EIICB component. In terms of biological role, shows zinc-dependent metallopeptidase activity. In Salmonella enteritidis PT4 (strain P125109), this protein is Mlc titration factor A.